Consider the following 894-residue polypeptide: MKFSHSLQFNSVPEWSTKYLAYSQLKKLIYSLQKDKLYSNNKHHVVEPHDANDENLPLLADASPDDQFYISKFVAALNQELKKIDKFYISQETGLIANYNELKDDVMELENTNKATQLFNQQQQHQLQSVARNRKSKSQQRQRRFSSVSSTDSNPSLTDMSIDSAPVIHTQVSNTTNNGNSMQNLASASVSLSNSNPVYLSPFTQHRLSLKKRLISIYTQLSELKDFIELNQTGFSKICKKFDKSLNTNLKQNYLNYIKFHSHVFNPATINRIQHHITETILTYASLNKGTRRPSNTFNLDADRINNDENSSGNEEDEDGNRQEVLDFQDAERELSSHLRDHVVWERNTVWKDMMNLERKYQSAKTDNKKFSKLSSSQLRPNANITESMAMSSGGAGIIAPSTDSLTFRELMHLPPKQWLQFIMGQTSLLKFLLITSCFIALLTFNLTPFTQDSLQKNCFAILIYASLLWATETIPLFVTSLMIPLLIVVFPVIKDPITSQPMSPRDSSQFILSTMWSSVIMLLLGGFTLAAALSKYNIAKVLSTHILASAGTNPHFILLTNMFVALFVSMWVSNVAAPVLCYSIVQPLLRTLPRNCSYAKALILGIALASNIGGMSSPIASPQNIFSIGIMDPSPSWAEWFMIALPVCFICVMAIWVLLIITFPPEPNVKILQLHPSRDPFTLKQWFVTLVCIITIVLWCLSNQISGIFGEMGIISIIPIVVFFGTGLLTSDDFNNFMWTIVVLAMGGTTLGKAVSSSGLLSTMAQLIKAQVEHEPIFIIVLIFGLVILVMATFVSHTVAAMIIVPLMSEIGSNLPSGDHSRLLIVIAALLCSSAMGLPTSGFPNVTAISMIDEVGDRYLTVGTFITRGVPASLLSYAAIVTVGYGILKVMGF.

Residues 1–256 form the SPX domain; sequence MKFSHSLQFN…NTNLKQNYLN (256 aa). Disordered stretches follow at residues 124–160 and 293–321; these read QHQL…LTDM and RPSN…EDGN. Positions 132 to 144 are enriched in basic residues; the sequence is RNRKSKSQQRQRR. Over residues 151-160 the composition is skewed to polar residues; that stretch reads TDSNPSLTDM. Residues Ser-295, Ser-311, and Ser-312 each carry the phosphoserine modification. 13 helical membrane passes run 430-450, 474-494, 511-531, 557-577, 602-622, 642-662, 682-702, 706-726, 738-758, 777-797, 799-819, 824-844, and 874-894; these read LKFL…LTPF, TIPL…FPVI, FILS…FTLA, FILL…SNVA, ALIL…PIAS, FMIA…LLII, FTLK…LWCL, ISGI…VFFG, FMWT…AVSS, PIFI…TFVS, TVAA…LPSG, LLIV…TSGF, and SLLS…VMGF.

The protein belongs to the CitM (TC 2.A.11) transporter family. Ubiquitinated by RSP5. RSP5-mediated ubiquitination initiates internalization and degradation by the endocytic pathway.

Its subcellular location is the vacuole membrane. In terms of biological role, vacuolar phosphate transporter that probably exports phosphate from the vacuolar lumen to the cytosol. This Saccharomyces cerevisiae (strain ATCC 204508 / S288c) (Baker's yeast) protein is Low-affinity phosphate transporter PHO91 (PHO91).